Here is a 414-residue protein sequence, read N- to C-terminus: 3-oxoacyl-[acyl-carrier-protein] synthase 2 (414 aa).

The Ketosynthase family 3 (KS3) domain maps to 4–411 (NKRVVITGMG…GHNAVLVFKK (408 aa)). Residues Cys-165, His-304, and His-341 each act as for beta-ketoacyl synthase activity in the active site.

It belongs to the thiolase-like superfamily. Beta-ketoacyl-ACP synthases family.

It catalyses the reaction a fatty acyl-[ACP] + malonyl-[ACP] + H(+) = a 3-oxoacyl-[ACP] + holo-[ACP] + CO2. It carries out the reaction (9Z)-hexadecenoyl-[ACP] + malonyl-[ACP] + H(+) = 3-oxo-(11Z)-octadecenoyl-[ACP] + holo-[ACP] + CO2. It functions in the pathway lipid metabolism; fatty acid biosynthesis. In terms of biological role, involved in the type II fatty acid elongation cycle. Catalyzes the elongation of a wide range of acyl-ACP by the addition of two carbons from malonyl-ACP to an acyl acceptor. Can efficiently catalyze the conversion of palmitoleoyl-ACP (cis-hexadec-9-enoyl-ACP) to cis-vaccenoyl-ACP (cis-octadec-11-enoyl-ACP), an essential step in the thermal regulation of fatty acid composition. The chain is 3-oxoacyl-[acyl-carrier-protein] synthase 2 (fabF) from Staphylococcus aureus (strain MW2).